We begin with the raw amino-acid sequence, 336 residues long: Anthranilate phosphoribosyltransferase (336 aa).

Residues Gly-79, 82–83 (GD), Thr-87, 89–92 (NIST), 107–115 (KHGNRAMSS), and Ser-119 each bind 5-phospho-alpha-D-ribose 1-diphosphate. Gly-79 lines the anthranilate pocket. Residue Ser-91 participates in Mg(2+) binding. Anthranilate is bound at residue Asn-110. Arg-165 contacts anthranilate. The Mg(2+) site is built by Asp-225 and Glu-226.

This sequence belongs to the anthranilate phosphoribosyltransferase family. Homodimer. Mg(2+) serves as cofactor.

The enzyme catalyses N-(5-phospho-beta-D-ribosyl)anthranilate + diphosphate = 5-phospho-alpha-D-ribose 1-diphosphate + anthranilate. The protein operates within amino-acid biosynthesis; L-tryptophan biosynthesis; L-tryptophan from chorismate: step 2/5. Its function is as follows. Catalyzes the transfer of the phosphoribosyl group of 5-phosphorylribose-1-pyrophosphate (PRPP) to anthranilate to yield N-(5'-phosphoribosyl)-anthranilate (PRA). In Dictyoglomus thermophilum (strain ATCC 35947 / DSM 3960 / H-6-12), this protein is Anthranilate phosphoribosyltransferase.